The chain runs to 203 residues: Endo-type membrane-bound lytic murein transglycosylase A (203 aa).

Residues 1–15 (MKLRWFAFLIVLLAG) form the signal peptide. The N-palmitoyl cysteine moiety is linked to residue cysteine 16. Cysteine 16 carries S-diacylglycerol cysteine lipidation.

It belongs to the transglycosylase Slt family.

Its subcellular location is the cell outer membrane. It carries out the reaction Endolytic cleavage of the (1-&gt;4)-beta-glycosidic linkage between N-acetylmuramic acid (MurNAc) and N-acetylglucosamine (GlcNAc) residues in peptidoglycan with concomitant formation of a 1,6-anhydrobond in the MurNAc residue.. Its function is as follows. Murein-degrading enzyme. May play a role in recycling of muropeptides during cell elongation and/or cell division. Preferentially cleaves at a distance of more than two disaccharide units from the ends of the glycan chain. In Escherichia coli O127:H6 (strain E2348/69 / EPEC), this protein is Endo-type membrane-bound lytic murein transglycosylase A.